We begin with the raw amino-acid sequence, 404 residues long: Tryptophan synthase beta chain (404 aa).

N6-(pyridoxal phosphate)lysine is present on K98.

It belongs to the TrpB family. Tetramer of two alpha and two beta chains. Requires pyridoxal 5'-phosphate as cofactor.

The enzyme catalyses (1S,2R)-1-C-(indol-3-yl)glycerol 3-phosphate + L-serine = D-glyceraldehyde 3-phosphate + L-tryptophan + H2O. Its pathway is amino-acid biosynthesis; L-tryptophan biosynthesis; L-tryptophan from chorismate: step 5/5. In terms of biological role, the beta subunit is responsible for the synthesis of L-tryptophan from indole and L-serine. The chain is Tryptophan synthase beta chain from Rhodopseudomonas palustris (strain BisB5).